Consider the following 750-residue polypeptide: Retron Eco8 OLD nuclease (750 aa).

The segment at 1–173 (MTIESIRVKN…IDLYDWNPIW (173 aa)) is ATPase domain N-terminus. Residue 33-37 (NVGKS) coordinates ATP. Residues 174-260 (KLISNLNSFN…TQSDGTNSNK (87 aa)) are dimerization domain. An ATPase domain C-terminus region spans residues 261 to 390 (FLETLLHLLI…FSDNEARLFF (130 aa)). Positions 391–704 (SEYIVFVEGA…SGWVTTFLNY (314 aa)) are toprim domain. E398, E402, D450, D452, S623, and E641 together coordinate a divalent metal cation.

This sequence belongs to the class 1 OLD nuclease family. Homodimer. Requires a divalent metal cation as cofactor.

Functionally, probable nuclease member of antiviral defense system retron Eco8, composed of an reverse transcriptase (RT), this nuclease and a non-coding RNA (ncRNA) encoded between them. Expression of retron Eco8 confers protection against bacteriophages T4, T6, T7 and SECphi4, SECphi6 and SECphi18. At multiplicity of infection (MOI) of 0.02 cultures slow growth when infected with SECphi4 but do not collapse, at MOI 2 cultures collapse. When the retron is cloned in another E.coli strain synthesizes msDNA (a branched RNA linked by a 2',5'-phosphodiester bond to a single-stranded DNA). The retron transcript serves as primer and template to the reaction, and codes for the RT. This is Retron Eco8 OLD nuclease from Escherichia coli.